The following is a 141-amino-acid chain: Large ribosomal subunit protein uL11 (141 aa).

The protein belongs to the universal ribosomal protein uL11 family. Part of the ribosomal stalk of the 50S ribosomal subunit. Interacts with L10 and the large rRNA to form the base of the stalk. L10 forms an elongated spine to which L12 dimers bind in a sequential fashion forming a multimeric L10(L12)X complex. One or more lysine residues are methylated.

Functionally, forms part of the ribosomal stalk which helps the ribosome interact with GTP-bound translation factors. This Streptococcus agalactiae serotype III (strain NEM316) protein is Large ribosomal subunit protein uL11.